We begin with the raw amino-acid sequence, 782 residues long: Cyclic nucleotide-gated channel beta-3 (782 aa).

Disordered stretches follow at residues 1–111 and 147–168; these read MFKS…PKSK and GDIS…PSTQ. The Cytoplasmic portion of the chain corresponds to 1-213; the sequence is MFKSLTIKSN…SIDSYTDRLY (213 aa). Composition is skewed to basic and acidic residues over residues 13 to 25 and 57 to 73; these read KPRE…KQDP and EESH…KNSL. 2 stretches are compositionally biased toward polar residues: residues 74–83 and 152–168; these read RDLTTNPNHQ and PEAS…PSTQ. Residues 214–237 traverse the membrane as a helical segment; sequence LLWLLLVTIAYNWNCWLIPLRLVF. At 238-244 the chain is on the extracellular side; the sequence is PYQTPDN. A helical transmembrane segment spans residues 245-265; it reads THYWFITDITCDIIYLCDMLL. Over 266–294 the chain is Cytoplasmic; the sequence is IQPRLQFIKGGDIMVDSNELKRHYRSSTK. The chain crosses the membrane as a helical span at residues 295-312; that stretch reads FQLDVASVMPFDVFYLFF. At 313–315 the chain is on the extracellular side; that stretch reads GFN. A helical membrane pass occupies residues 316 to 330; the sequence is PVFRMNRILKYTSFF. The Cytoplasmic portion of the chain corresponds to 331–343; the sequence is EFNHHLESIMDKA. The segment at 343 to 442 is ion conduction pathway; sequence AYIYRVIRTT…IGQMQDVIGA (100 aa). Residues 344–366 traverse the membrane as a helical segment; sequence YIYRVIRTTGYLLYTLHINACIY. Residues 367–388 lie on the Extracellular side of the membrane; that stretch reads YWASDYEGIGSTKWVYNGEGNK. Helical transmembrane passes span 389–415 and 416–440; these read YLRC…SFEI and VFQL…QDVI. The segment at 402–405 is selectivity filter; that stretch reads TIGG. Over 441 to 782 the chain is Cytoplasmic; it reads GAATANQNNF…TIEVKEKAKQ (342 aa). Residues 445-521 are C-linker; the sequence is ANQNNFRISM…SIISKVELFK (77 aa). The cyclic nucleotide-binding domain stretch occupies residues 525–641; the sequence is TQMIYDMLLR…LLMKKASVLL (117 aa). 3',5'-cyclic GMP is bound by residues glycine 586, glutamate 587, arginine 599, and threonine 600. The segment at 692 to 724 is disordered; that stretch reads EQTIQKTSENSEEGGGKRREYEDKEREPSEKIL. Positions 705–724 are enriched in basic and acidic residues; it reads GGGKRREYEDKEREPSEKIL.

It belongs to the cyclic nucleotide-gated cation channel (TC 1.A.1.5) family. CNGB3 subfamily. Forms heterotetrameric channels composed of CNGA3 and CNGB3 subunits with 3:1 stoichiometry.

The protein resides in the cell membrane. It carries out the reaction Ca(2+)(in) = Ca(2+)(out). It catalyses the reaction Na(+)(in) = Na(+)(out). The enzyme catalyses K(+)(in) = K(+)(out). The catalysed reaction is NH4(+)(in) = NH4(+)(out). It carries out the reaction Rb(+)(in) = Rb(+)(out). It catalyses the reaction Li(+)(in) = Li(+)(out). The enzyme catalyses Cs(+)(in) = Cs(+)(out). Functionally, pore-forming subunit of the cone cyclic nucleotide-gated channel. Mediates cone photoresponses at bright light converting transient changes in intracellular cGMP levels into electrical signals. In the dark, cGMP levels are high and keep the channel open enabling a steady inward current carried by Na(+) and Ca(2+) ions that leads to membrane depolarization and neurotransmitter release from synaptic terminals. Upon photon absorption cGMP levels decline leading to channel closure and membrane hyperpolarization that ultimately slows neurotransmitter release and signals the presence of light, the end point of the phototransduction cascade. Conducts cGMP- and cAMP-gated ion currents, with permeability for monovalent and divalent cations. In Canis lupus familiaris (Dog), this protein is Cyclic nucleotide-gated channel beta-3.